A 69-amino-acid polypeptide reads, in one-letter code: Large ribosomal subunit protein uL30 (69 aa).

Belongs to the universal ribosomal protein uL30 family. In terms of assembly, part of the 50S ribosomal subunit.

This chain is Large ribosomal subunit protein uL30, found in Rhizobium etli (strain CIAT 652).